A 311-amino-acid chain; its full sequence is ADP-ribosyl cyclase/cyclic ADP-ribose hydrolase 2 (311 aa).

A signal peptide spans 1–24 (MAVQGGLLSLWLWLWLSLLTVLLG). 3 cysteine pairs are disulfide-bonded: cysteine 46–cysteine 60, cysteine 76–cysteine 156, and cysteine 137–cysteine 150. N-linked (GlcNAc...) asparagine glycosylation is found at asparagine 59 and asparagine 88. Tryptophan 102 lines the NAD(+) pocket. Tryptophan 102 contacts nicotinamide. Asparagine 141 carries N-linked (GlcNAc...) asparagine glycosylation. Tryptophan 165 is a binding site for NAD(+). The N-linked (GlcNAc...) asparagine glycan is linked to asparagine 185. Position 203 (glutamate 203) interacts with NAD(+). 2 cysteine pairs are disulfide-bonded: cysteine 231–cysteine 252 and cysteine 264–cysteine 273. Serine 286 carries GPI-anchor amidated serine lipidation. Positions 287–311 (ASLHAIGDASLLISLLVALASSSQA) are excised as a propeptide.

This sequence belongs to the ADP-ribosyl cyclase family. Homodimer. Expressed in the bone marrow, spleen and thymus in lymphoid organs, and the lung, kidney and heart in non-lymphoid organs.

The protein resides in the cell membrane. It carries out the reaction NAD(+) + H2O = ADP-D-ribose + nicotinamide + H(+). It catalyses the reaction NAD(+) = cyclic ADP-beta-D-ribose + nicotinamide + H(+). The catalysed reaction is cyclic ADP-beta-D-ribose + H2O = ADP-D-ribose. Its function is as follows. Catalyzes both the synthesis of cyclic ADP-beta-D-ribose (cADPR) from NAD(+), and its hydrolysis to ADP-D-ribose (ADPR). Cyclic ADPR is known to serve as an endogenous second messenger that elicits calcium release from intracellular stores, and thus regulates the mobilization of intracellular calcium. May be involved in pre-B-cell growth. The polypeptide is ADP-ribosyl cyclase/cyclic ADP-ribose hydrolase 2 (Bst1) (Mus musculus (Mouse)).